A 502-amino-acid polypeptide reads, in one-letter code: Glycerol kinase (502 aa).

An ADP-binding site is contributed by T14. Residues T14, T15, and S16 each coordinate ATP. Residue T14 participates in sn-glycerol 3-phosphate binding. R18 contributes to the ADP binding site. Residues R84, E85, and Y136 each coordinate sn-glycerol 3-phosphate. Glycerol is bound by residues R84, E85, and Y136. At H232 the chain carries Phosphohistidine; by HPr. D246 contacts sn-glycerol 3-phosphate. Glycerol-binding residues include D246 and Q247. Residues T268 and G311 each coordinate ADP. ATP contacts are provided by T268, G311, Q315, and G412. 2 residues coordinate ADP: G412 and N416.

The protein belongs to the FGGY kinase family. As to quaternary structure, homotetramer and homodimer (in equilibrium). Post-translationally, the phosphoenolpyruvate-dependent sugar phosphotransferase system (PTS), including enzyme I, and histidine-containing protein (HPr) are required for the phosphorylation, which leads to the activation of the enzyme.

The catalysed reaction is glycerol + ATP = sn-glycerol 3-phosphate + ADP + H(+). The protein operates within polyol metabolism; glycerol degradation via glycerol kinase pathway; sn-glycerol 3-phosphate from glycerol: step 1/1. With respect to regulation, activated by phosphorylation and inhibited by fructose 1,6-bisphosphate (FBP). Its function is as follows. Key enzyme in the regulation of glycerol uptake and metabolism. Catalyzes the phosphorylation of glycerol to yield sn-glycerol 3-phosphate. This chain is Glycerol kinase, found in Streptococcus pneumoniae serotype 2 (strain D39 / NCTC 7466).